Reading from the N-terminus, the 945-residue chain is Valine--tRNA ligase (945 aa).

The 'HIGH' region motif lies at 42 to 52; the sequence is PNVTGTLHMGH. The short motif at 552–556 is the 'KMSKS' region element; sequence KMSKS. ATP is bound at residue lysine 555. The stretch at 879 to 945 forms a coiled coil; it reads DKAAETARLS…VQNQLAKLKD (67 aa).

Belongs to the class-I aminoacyl-tRNA synthetase family. ValS type 1 subfamily. Monomer.

It localises to the cytoplasm. The enzyme catalyses tRNA(Val) + L-valine + ATP = L-valyl-tRNA(Val) + AMP + diphosphate. Catalyzes the attachment of valine to tRNA(Val). As ValRS can inadvertently accommodate and process structurally similar amino acids such as threonine, to avoid such errors, it has a 'posttransfer' editing activity that hydrolyzes mischarged Thr-tRNA(Val) in a tRNA-dependent manner. The protein is Valine--tRNA ligase of Neisseria meningitidis serogroup B (strain ATCC BAA-335 / MC58).